We begin with the raw amino-acid sequence, 317 residues long: Transcriptional regulator LsrR (317 aa).

Positions 33–56 form a DNA-binding region, H-T-H motif; that stretch reads QSEISDRLGLTRLKVSRLLEKGHQ.

This sequence belongs to the SorC transcriptional regulatory family.

The protein resides in the cytoplasm. With respect to regulation, inactivated by phosphorylated autoinducer-2 (phospho-AI-2). Phospho-AI-2 acts by binding to LsrR, which is then unable to bind to the promoter regions, allowing the transcription of the target genes. Functionally, transcriptional regulator that represses the expression of the lsr operon in the absence of the quorum-sensing signaling molecule autoinducer 2 (AI-2). It also represses the expression of the lsrRK operon. Acts by binding directly to the lsrA and lsrR promoter regions. In the presence of phosphorylated autoinducer-2 (phospho-AI-2), LsrR is inactivated, leading to the transcription of the genes. This chain is Transcriptional regulator LsrR (lsrR), found in Escherichia coli O139:H28 (strain E24377A / ETEC).